An 863-amino-acid chain; its full sequence is Scm-like with four MBT domains protein 1 (863 aa).

MBT repeat units lie at residues F20 to P120, S128 to P232, A242 to P346, and F354 to P451. The interval K638–P773 is disordered. Residues K660–S679 show a composition bias toward basic residues. Positions S680–P691 are enriched in polar residues. Composition is skewed to acidic residues over residues G696–L710 and Q718–E727. The span at S734–P744 shows a compositional bias: low complexity. Residues S764 and S772 each carry the phosphoserine modification. The SAM domain occupies W793–F861.

As to quaternary structure, interacts with MYOD1. Component of the SLC (SFMBT1-LSD1-CoREST) corepressor complex, which also contains KDM1A/LSD1 and RCOR1/CoREST. Interacts with KDM1A/LSD1 and RCOR1/CoREST. Interacts with MYOD1. Interacts with L3MBTL3. As to expression, highly expressed in the testis, low expression is detected in brain, kidney, heart and lung. Highly expressed in germ cells, where it associates with the synaptic regions of meiotic chromosomes in pachytene stage spermatocytes.

Its subcellular location is the nucleus. In terms of biological role, histone-binding protein, which is part of various corepressor complexes. Mediates the recruitment of corepressor complexes to target genes, followed by chromatin compaction and repression of transcription. Plays a role during myogenesis: required for the maintenance of undifferentiated states of myogenic progenitor cells via interaction with MYOD1. Interaction with MYOD1 leads to the recruitment of associated corepressors and silencing of MYOD1 target genes. Part of the SLC complex in germ cells, where it may play a role during spermatogenesis. The protein is Scm-like with four MBT domains protein 1 (Sfmbt1) of Mus musculus (Mouse).